A 125-amino-acid polypeptide reads, in one-letter code: MORF4 family-associated protein 1 (125 aa).

The interval E76 to D99 is disordered. A coiled-coil region spans residues R94–S124.

Belongs to the MORF4 family-associated protein family. Found in a complex composed of MORF4L1, MRFAP1 and RB1. Interacts via its N-terminus with MORF4L1. Interacts with CSTB and MORF4L2. In terms of tissue distribution, widely expressed in all tissues examined and as early as 7 days during embryonic development.

The protein resides in the nucleus. The protein localises to the cytoplasm. It localises to the perinuclear region. This Mus musculus (Mouse) protein is MORF4 family-associated protein 1.